Reading from the N-terminus, the 277-residue chain is MGYYSVGIPFLYFKIPFTNSIRLCILYSLIGRTSPIIERKQEKLMLYMGVGDSMGRQKLTIKDINIRLADRGIQIVGEYVNQRTKTVFKCQRAHVWEATPHSILHMRRGCPHCSNNTISLDEVSNRISNIGYTLLSSYTNAKTKLHLRCNNGHDCFITLDGLTQGKRCPYCSLKWENGGFLYIMSFSSGTKVGISLYPEKRLNEVKRESGFSDLYLFTMYHLPDRETALDLEKEVHREYYNKNCGFSNFTGSTEFFNVAPEDIVIFLNSFGLEEYGH.

In terms of biological role, putative endonuclease. The chain is Putative endonuclease from Escherichia coli (Enterobacteria phage T5).